The chain runs to 442 residues: MSIITDIYAREVLDSRGNPTVEVELYTESGAFGRGIVPSGASTGEHEAVELRDGDKSRFMGKGVTKAVDNVNKLIAKEIVGYDVTDQRAIDQAMIKLDGTPNKAKLGANAILGVSIAAARAAADELEMPLYNYLGGFNAHVLPTPMMNVINGGAHANNDVDFQEFMIMPVGASSVKEAIRMGSETFHNLKAILNERGYSTAVGDEGGFAPDLKNNEEPFEILVEAIERAGYKPGKDIAIAFDCAASEFYNEETGKYDLKGEGENGQSFTAEEFVDLLDSIVDKYPIVSIEDPLDENNWEDWQMATAKLGKKVQIVGDDLFVTNTDYLAKGIKMGVANSILIKVNQIGTLTETVEAIEMAKEAGYTAIVSHRSGETEDTTIADLVVAMNAGQIKTGSMSRTERIAKYNQLMRIEDQLESTSEYKGIHGFYNLDEAARNTITSK.

A binds human collagen region spans residues 73–140 (KLIAKEIVGY…YNYLGGFNAH (68 aa)). Q163 provides a ligand contact to (2R)-2-phosphoglycerate. E205 acts as the Proton donor in catalysis. D242, E290, and D317 together coordinate Mg(2+). Positions 342, 371, 372, and 393 each coordinate (2R)-2-phosphoglycerate. The Proton acceptor role is filled by K342.

Belongs to the enolase family. Mg(2+) serves as cofactor.

The protein localises to the cytoplasm. The protein resides in the secreted. It localises to the cell surface. The enzyme catalyses (2R)-2-phosphoglycerate = phosphoenolpyruvate + H2O. The protein operates within carbohydrate degradation; glycolysis; pyruvate from D-glyceraldehyde 3-phosphate: step 4/5. Its function is as follows. Catalyzes the reversible conversion of 2-phosphoglycerate (2-PG) into phosphoenolpyruvate (PEP). It is essential for the degradation of carbohydrates via glycolysis. 'Moonlights' as a collagen receptor. Binds host (human) collagen, which may contribute to pathogenicity. This chain is Enolase 1, found in Lactiplantibacillus plantarum (strain ATCC BAA-793 / NCIMB 8826 / WCFS1) (Lactobacillus plantarum).